Here is a 236-residue protein sequence, read N- to C-terminus: Alpha-tubulin N-acetyltransferase (236 aa).

The region spanning 21-201 (ASVPDGVSRW…NKFVVFHGFF (181 aa)) is the N-acetyltransferase domain. Residues 134-147 (FYVDESCQRQGYGK) and 171-180 (SDKLLGFMKK) each bind acetyl-CoA. Residues 217 to 236 (SPTGAAAAATGTKAKNEMPG) form a disordered region. Low complexity predominate over residues 219–229 (TGAAAAATGTK).

This sequence belongs to the acetyltransferase ATAT1 family.

The catalysed reaction is L-lysyl-[alpha-tubulin] + acetyl-CoA = N(6)-acetyl-L-lysyl-[alpha-tubulin] + CoA + H(+). In terms of biological role, specifically acetylates 'Lys-40' in alpha-tubulin on the lumenal side of microtubules. Promotes microtubule destabilization and accelerates microtubule dynamics; this activity may be independent of acetylation activity. Acetylates alpha-tubulin with a slow enzymatic rate, due to a catalytic site that is not optimized for acetyl transfer. Enters the microtubule through each end and diffuses quickly throughout the lumen of microtubules. Acetylates only long/old microtubules because of its slow acetylation rate since it does not have time to act on dynamically unstable microtubules before the enzyme is released. In Leishmania braziliensis, this protein is Alpha-tubulin N-acetyltransferase.